The following is a 256-amino-acid chain: MKFIVIKIGGSTLSDMHPSIINNIKHLRSNNIYPIIVHGGGPFINEALSNQQIEPHFVNGLRVTDKATMTITKHTLIADVNTALVAQFNQHQCSAIGLCGLDAQLFEIKRFDQQYGYVGVPTTLNIDSLSYLCTKFVPIINSIGFNNHDGEFYNINADTLAYFIAASLEAPIYVLSNIAGVLINDVVIPQLPLADINQYIEHGDIYGGMIPKVLDAKNAIENGCPKVIIASGNKPNIIEAIYNNDFVGTTILKSLV.

Substrate contacts are provided by residues 40–41, Arg62, and Asn154; that span reads GG.

It belongs to the acetylglutamate kinase family. ArgB subfamily.

Its subcellular location is the cytoplasm. It carries out the reaction N-acetyl-L-glutamate + ATP = N-acetyl-L-glutamyl 5-phosphate + ADP. Its pathway is amino-acid biosynthesis; L-arginine biosynthesis; N(2)-acetyl-L-ornithine from L-glutamate: step 2/4. Functionally, catalyzes the ATP-dependent phosphorylation of N-acetyl-L-glutamate. The polypeptide is Acetylglutamate kinase (Staphylococcus aureus (strain bovine RF122 / ET3-1)).